A 113-amino-acid polypeptide reads, in one-letter code: P antigen family member 3 (113 aa).

Residues 1–12 (MSGHQRTRSRSR) are compositionally biased toward basic residues. Disordered regions lie at residues 1-61 (MSGH…EGAL) and 78-113 (SKTGGERGDGPNVKGEFLPNLEPVKIPEAGEGQPSV).

Belongs to the GAGE family.

This Homo sapiens (Human) protein is P antigen family member 3 (PAGE3).